A 163-amino-acid chain; its full sequence is MAEEHRLQEPRLCANNCGFFGSTATQNLCSKCFRDLQHQEQNSSTAKHALTQSLAAVGAAASSSVSPPPPPPADSKEIVEAKSEKRAAAEPEEADGPPQDPKRCLTCRRRVGITGFRCRCGFVFCGTHRYAEQHECSFDFKRMGKDKIAKANPIVKADKLEKI.

Residues 7–41 (LQEPRLCANNCGFFGSTATQNLCSKCFRDLQHQEQ) form an A20-type zinc finger. Residues Cys13, Cys17, Cys29, and Cys32 each coordinate Zn(2+). Positions 57–101 (VGAAASSSVSPPPPPPADSKEIVEAKSEKRAAAEPEEADGPPQDP) are disordered. Residues 74–89 (DSKEIVEAKSEKRAAA) show a composition bias toward basic and acidic residues. The segment at 98-144 (PQDPKRCLTCRRRVGITGFRCRCGFVFCGTHRYAEQHECSFDFKRMG) adopts an AN1-type zinc-finger fold. Zn(2+) is bound by residues Cys104, Cys107, Cys118, Cys120, Cys125, His128, His134, and Cys136.

Its function is as follows. May be involved in environmental stress response. The protein is Zinc finger A20 and AN1 domain-containing stress-associated protein 3 (SAP3) of Arabidopsis thaliana (Mouse-ear cress).